The primary structure comprises 737 residues: Palmitoyltransferase akr1 (737 aa).

The disordered stretch occupies residues 1–60; that stretch reads MSSGDPPSGLQASGSNSSAALGLSPPSAPSGKSAATPPKVATDDASVELSSMKSERSPAK. Residues 1-314 are Cytoplasmic-facing; it reads MSSGDPPSGL…YVRDKAIMSK (314 aa). Residues 7 to 38 show a composition bias toward low complexity; the sequence is PSGLQASGSNSSAALGLSPPSAPSGKSAATPP. 5 ANK repeats span residues 97 to 126, 131 to 160, 164 to 193, 197 to 226, and 230 to 259; these read EGITPLHWAAINNQYAMCKFLIDSGADVNA, SVATPAMWAAQRCHYYIVHLLLQYGADPLL, QGYNILHLATIDGNAFLLVLLLHQEIPVDV, QGHTGLMWAAYKGYPACVDLFLRWGANPNA, and GGLAPLHWALVKGSLPCVLKILEYGADRFA. Helical transmembrane passes span 315–335 and 336–356; these read FFFFWPFLLLFVVLWILSNMV and VYFAIPVAAVAVFGLQWVAKK. Topologically, residues 357-372 are cytoplasmic; it reads AASQGPSEFRIIQKTP. Residues 373–393 traverse the membrane as a helical segment; it reads FLAGVFAGSLFWVFVRYVLYV. The Lumenal segment spans residues 394 to 402; it reads LPATYSTNP. A helical transmembrane segment spans residues 403-423; it reads FLNLGFVVFFSLTTYFYFYSM. Residues 424–500 lie on the Cytoplasmic side of the membrane; sequence VADPGYVPKL…NCVGVNNLRQ (77 aa). The 51-residue stretch at 456–506 folds into the DHHC domain; the sequence is NFCVYCMIRRPLRSKHCRRCSRCVAKHDHHCPWIDNCVGVNNLRQFVLYIL. Cysteine 486 (S-palmitoyl cysteine intermediate) is an active-site residue. A helical membrane pass occupies residues 501 to 521; that stretch reads FVLYILCLEIGIILFLHLTFN. At 522–549 the chain is on the lumenal side; it reads YINGLPAPAEPICNILNDQICSFVLRDT. A helical transmembrane segment spans residues 550–570; the sequence is FTLLLDVWIAIQLVWVTMLGV. Residues 571-737 lie on the Cytoplasmic side of the membrane; sequence VQLVQVSRNQ…VAYDEAADIV (167 aa).

It belongs to the DHHC palmitoyltransferase family. AKR/ZDHHC17 subfamily.

It localises to the early endosome membrane. Its subcellular location is the golgi apparatus membrane. It carries out the reaction L-cysteinyl-[protein] + hexadecanoyl-CoA = S-hexadecanoyl-L-cysteinyl-[protein] + CoA. Palmitoyltransferase specific for casein kinase 1. The chain is Palmitoyltransferase akr1 (akr1) from Emericella nidulans (strain FGSC A4 / ATCC 38163 / CBS 112.46 / NRRL 194 / M139) (Aspergillus nidulans).